Reading from the N-terminus, the 409-residue chain is Glucose-1-phosphate adenylyltransferase (409 aa).

Residues Gly168, Glu183–Lys184, and Ser201 each bind alpha-D-glucose 1-phosphate.

It belongs to the bacterial/plant glucose-1-phosphate adenylyltransferase family. Homotetramer.

The enzyme catalyses alpha-D-glucose 1-phosphate + ATP + H(+) = ADP-alpha-D-glucose + diphosphate. It functions in the pathway glycan biosynthesis; glycogen biosynthesis. Involved in the biosynthesis of ADP-glucose, a building block required for the elongation reactions to produce glycogen. Catalyzes the reaction between ATP and alpha-D-glucose 1-phosphate (G1P) to produce pyrophosphate and ADP-Glc. The protein is Glucose-1-phosphate adenylyltransferase of Corynebacterium efficiens (strain DSM 44549 / YS-314 / AJ 12310 / JCM 11189 / NBRC 100395).